A 42-amino-acid polypeptide reads, in one-letter code: Photosystem I reaction center subunit IX (42 aa).

The helical transmembrane segment at 7 to 27 threads the bilayer; the sequence is YLSTAPVLAAIWFGILAGLLI.

It belongs to the PsaJ family.

The protein resides in the plastid. It localises to the chloroplast thylakoid membrane. Its function is as follows. May help in the organization of the PsaE and PsaF subunits. The chain is Photosystem I reaction center subunit IX from Staurastrum punctulatum (Green alga).